Here is a 365-residue protein sequence, read N- to C-terminus: Alanine racemase (365 aa).

Lysine 32 functions as the Proton acceptor; specific for D-alanine in the catalytic mechanism. Position 32 is an N6-(pyridoxal phosphate)lysine (lysine 32). Arginine 128 is a substrate binding site. Tyrosine 257 serves as the catalytic Proton acceptor; specific for L-alanine. Methionine 305 contributes to the substrate binding site.

This sequence belongs to the alanine racemase family. It depends on pyridoxal 5'-phosphate as a cofactor.

The catalysed reaction is L-alanine = D-alanine. It participates in amino-acid biosynthesis; D-alanine biosynthesis; D-alanine from L-alanine: step 1/1. In terms of biological role, catalyzes the interconversion of L-alanine and D-alanine. May also act on other amino acids. This Francisella tularensis subsp. holarctica (strain LVS) protein is Alanine racemase (alr).